We begin with the raw amino-acid sequence, 200 residues long: LexA repressor (200 aa).

The segment at residues 28–48 (RAEIAQHFGFSSPNAAEQHLK) is a DNA-binding region (H-T-H motif). Active-site for autocatalytic cleavage activity residues include S117 and K154.

It belongs to the peptidase S24 family. As to quaternary structure, homodimer.

The enzyme catalyses Hydrolysis of Ala-|-Gly bond in repressor LexA.. In terms of biological role, represses a number of genes involved in the response to DNA damage (SOS response), including recA and lexA. In the presence of single-stranded DNA, RecA interacts with LexA causing an autocatalytic cleavage which disrupts the DNA-binding part of LexA, leading to derepression of the SOS regulon and eventually DNA repair. The chain is LexA repressor from Thiobacillus denitrificans (strain ATCC 25259 / T1).